A 799-amino-acid polypeptide reads, in one-letter code: Phenylalanine--tRNA ligase beta subunit (799 aa).

A tRNA-binding domain is found at 40-147 (KSHLSSVITV…KDTTLGISVR (108 aa)). The 78-residue stretch at 402 to 479 (SKTVTIETNL…RTIGYASIRT (78 aa)) folds into the B5 domain. Mg(2+)-binding residues include aspartate 457, aspartate 463, glutamate 466, and glutamate 467. One can recognise an FDX-ACB domain in the interval 707–799 (SHFPQGQLDL…TAKSNGYSLR (93 aa)).

Belongs to the phenylalanyl-tRNA synthetase beta subunit family. Type 1 subfamily. As to quaternary structure, tetramer of two alpha and two beta subunits. It depends on Mg(2+) as a cofactor.

The protein resides in the cytoplasm. The enzyme catalyses tRNA(Phe) + L-phenylalanine + ATP = L-phenylalanyl-tRNA(Phe) + AMP + diphosphate + H(+). The chain is Phenylalanine--tRNA ligase beta subunit from Leptospira biflexa serovar Patoc (strain Patoc 1 / Ames).